We begin with the raw amino-acid sequence, 281 residues long: Cytochrome c oxidase subunit 3 (281 aa).

Residues 1 to 15 are Mitochondrial matrix-facing; sequence MTHQTHAYHMVNPSP. Residues 16-34 traverse the membrane as a helical segment; that stretch reads WPLTGALSALLLTSGLIMW. At 35–40 the chain is on the mitochondrial intermembrane side; sequence FHYNSS. A helical transmembrane segment spans residues 41–66; the sequence is TLMFMGLTTMLLTMYQWWRDIIREGT. Topologically, residues 67 to 72 are mitochondrial matrix; the sequence is FQGHHT. A helical transmembrane segment spans residues 73-105; it reads PVVQKGLRYGMILFILSEVFFFIGFFWAFYHSS. The Mitochondrial intermembrane portion of the chain corresponds to 106–128; that stretch reads LAPTPELGGCWPPTGIHPLNPLE. A helical transmembrane segment spans residues 129-152; it reads VPLLNTSILLASGVSITWAHHSLM. The Mitochondrial matrix segment spans residues 153–155; the sequence is EGN. Residues 156–183 traverse the membrane as a helical segment; sequence RKQMIQALLITISLGLYFTILQAMEYYE. Over 184 to 190 the chain is Mitochondrial intermembrane; that stretch reads ASFTISD. The chain crosses the membrane as a helical span at residues 191–223; it reads GVYGSTFFVATGFHGLHVIIGSTFLIVCLLRQL. Residues 224 to 232 lie on the Mitochondrial matrix side of the membrane; it reads FYHFTSTHH. The helical transmembrane segment at 233-256 threads the bilayer; the sequence is FGFEAAAWYWHFVDVVWLFLYVSI. Topologically, residues 257–281 are mitochondrial intermembrane; sequence YWWGSYFSSMISTTDFQSLSSGSNQ.

This sequence belongs to the cytochrome c oxidase subunit 3 family. Component of the cytochrome c oxidase (complex IV, CIV), a multisubunit enzyme composed of 14 subunits. The complex is composed of a catalytic core of 3 subunits MT-CO1, MT-CO2 and MT-CO3, encoded in the mitochondrial DNA, and 11 supernumerary subunits COX4I, COX5A, COX5B, COX6A, COX6B, COX6C, COX7A, COX7B, COX7C, COX8 and NDUFA4, which are encoded in the nuclear genome. The complex exists as a monomer or a dimer and forms supercomplexes (SCs) in the inner mitochondrial membrane with NADH-ubiquinone oxidoreductase (complex I, CI) and ubiquinol-cytochrome c oxidoreductase (cytochrome b-c1 complex, complex III, CIII), resulting in different assemblies (supercomplex SCI(1)III(2)IV(1) and megacomplex MCI(2)III(2)IV(2)).

Its subcellular location is the mitochondrion inner membrane. The catalysed reaction is 4 Fe(II)-[cytochrome c] + O2 + 8 H(+)(in) = 4 Fe(III)-[cytochrome c] + 2 H2O + 4 H(+)(out). Functionally, component of the cytochrome c oxidase, the last enzyme in the mitochondrial electron transport chain which drives oxidative phosphorylation. The respiratory chain contains 3 multisubunit complexes succinate dehydrogenase (complex II, CII), ubiquinol-cytochrome c oxidoreductase (cytochrome b-c1 complex, complex III, CIII) and cytochrome c oxidase (complex IV, CIV), that cooperate to transfer electrons derived from NADH and succinate to molecular oxygen, creating an electrochemical gradient over the inner membrane that drives transmembrane transport and the ATP synthase. Cytochrome c oxidase is the component of the respiratory chain that catalyzes the reduction of oxygen to water. Electrons originating from reduced cytochrome c in the intermembrane space (IMS) are transferred via the dinuclear copper A center (CU(A)) of subunit 2 and heme A of subunit 1 to the active site in subunit 1, a binuclear center (BNC) formed by heme A3 and copper B (CU(B)). The BNC reduces molecular oxygen to 2 water molecules using 4 electrons from cytochrome c in the IMS and 4 protons from the mitochondrial matrix. This chain is Cytochrome c oxidase subunit 3 (MT-CO3), found in Didelphis virginiana (North American opossum).